The chain runs to 358 residues: Alpha-2-HS-glycoprotein (358 aa).

The first 18 residues, 1–18, serve as a signal peptide directing secretion; it reads MKFFVLFLCLVQLWGCHS. The region spanning 27–133 is the Cystatin fetuin-A-type 1 domain; sequence ERNPACDDPE…QFSVVFAKCE (107 aa). 6 cysteine pairs are disulfide-bonded: Cys32/Cys349, Cys89/Cys100, Cys114/Cys132, Cys146/Cys149, Cys208/Cys218, and Cys229/Cys246. N-linked (GlcNAc...) asparagine glycosylation is present at Asn99. Ser134 bears the Phosphoserine mark. Phosphothreonine is present on Thr135. Position 138 is a phosphoserine (Ser138). Positions 144–254 constitute a Cystatin fetuin-A-type 2 domain; sequence KVCPQCPLLT…TCTVFPTQPV (111 aa). Asn156 and Asn176 each carry an N-linked (GlcNAc...) asparagine glycan. Residues 257–288 form a disordered region; it reads LPQPDAASSANPPPAADPAVSPPSSPSVPVDS. A compositionally biased stretch (pro residues) spans 267–282; sequence NPPPAADPAVSPPSSP. Residues Ser318 and Ser320 each carry the phosphoserine modification. The tract at residues 320–350 is disordered; that stretch reads SGEAFGPRQKPKVTHPGVASGVGPVPPPPCP.

Belongs to the fetuin family. In terms of processing, phosphorylated by FAM20C in the extracellular medium. As to expression, bone marrow.

The protein resides in the secreted. The polypeptide is Alpha-2-HS-glycoprotein (AHSG) (Cavia porcellus (Guinea pig)).